We begin with the raw amino-acid sequence, 327 residues long: MKELIKEHQKDINPALQLHDWVEYYRPFAANGQSANYIPALGKVNDSQLGICVLEPDGTMIHAGDWNVSFTMQSISKVISFIAACMSRGIPYVLDRVDVEPTGDAFNSIIRLEINKPGKPFNPMINAGALTIASILPGESAYEKLEFLYSVMETLIGKRPRIHEEVFRSEWETAHRNRALAYYLKETNFLEAEVEETLEVYLKQCAMESTTEDIALIGLILAHDGYHPIRHEQVIPKDVAKLAKALMLTCGMYNASGKYAAFVGVPAKSGVSGGIMALVPPSARREQPFQSGCGIGIYGPAIDEYGNSLTGGMLLKHMAQEWELSIF.

Ser74, Asn126, Glu170, Asn177, Tyr201, Tyr253, and Val271 together coordinate substrate.

The protein belongs to the glutaminase family. In terms of assembly, homotetramer.

It catalyses the reaction L-glutamine + H2O = L-glutamate + NH4(+). In Bacillus subtilis (strain 168), this protein is Glutaminase 1 (glsA1).